The following is a 457-amino-acid chain: Phenylalanine-4-hydroxylase (457 aa).

Residues 31–108 (TIVFTLREKA…EKKVLVQDWN (78 aa)) enclose the ACT domain. Positions 285, 290, and 330 each coordinate Fe cation.

Belongs to the biopterin-dependent aromatic amino acid hydroxylase family. In terms of assembly, homotetramer. Requires Fe(2+) as cofactor. As to expression, expressed in the seam cells of the lateral hypodermis, in the ventral hypodermis and in the hyp7 hypodermal syncytium, in hypodermal cells in the tail and in body wall muscle cells (at protein level).

The protein localises to the cytoplasm. The catalysed reaction is (6R)-L-erythro-5,6,7,8-tetrahydrobiopterin + L-phenylalanine + O2 = (4aS,6R)-4a-hydroxy-L-erythro-5,6,7,8-tetrahydrobiopterin + L-tyrosine. The enzyme catalyses (6R)-L-erythro-5,6,7,8-tetrahydrobiopterin + L-tryptophan + O2 = 5-hydroxy-L-tryptophan + (4aS,6R)-4a-hydroxy-L-erythro-5,6,7,8-tetrahydrobiopterin. The protein operates within amino-acid degradation; L-phenylalanine degradation; acetoacetate and fumarate from L-phenylalanine: step 1/6. Its activity is regulated as follows. Inhibited by tetrahydrobiopterin. Unlike its mammalian orthologs, pah-1 does not exhibit allosteric binding behavior for phenylalanine. Catalyzes the hydroxylation of L-phenylalanine to L-tyrosine. Catalyzes the hydroxylation of tryptophan to 5-hydroxy-L-tryptophan. Plays a role in the biosynthesis of a melanin-like cuticle pigment. The protein is Phenylalanine-4-hydroxylase of Caenorhabditis elegans.